Consider the following 115-residue polypeptide: MEKMLLKSTTRHVRIFTAEVVDKELQFHPNKLTLDLDPDNEFIWNEDSLKKINQKFKELINERAGRDLDDYELRKIGSEVEGLIKFLLQNGELSYNPDCRVMNYSMGLPKTNELL.

This sequence belongs to the complex I NdhM subunit family. NDH-1 can be composed of about 15 different subunits; different subcomplexes with different compositions have been identified which probably have different functions.

It localises to the cellular thylakoid membrane. It carries out the reaction a plastoquinone + NADH + (n+1) H(+)(in) = a plastoquinol + NAD(+) + n H(+)(out). The catalysed reaction is a plastoquinone + NADPH + (n+1) H(+)(in) = a plastoquinol + NADP(+) + n H(+)(out). Its function is as follows. NDH-1 shuttles electrons from an unknown electron donor, via FMN and iron-sulfur (Fe-S) centers, to quinones in the respiratory and/or the photosynthetic chain. The immediate electron acceptor for the enzyme in this species is believed to be plastoquinone. Couples the redox reaction to proton translocation, and thus conserves the redox energy in a proton gradient. Cyanobacterial NDH-1 also plays a role in inorganic carbon-concentration. The sequence is that of NAD(P)H-quinone oxidoreductase subunit M from Prochlorococcus marinus (strain MIT 9215).